The chain runs to 247 residues: MNEKIAILSAYSFVNIEEPANLIPKLLLIGKRKYVRGTILLANEGFNGSFSGSYENVNLVLEELIKLTGPKDVNVKINYSDVHPFQKLKVRLKKEIVAMNVDGLNVDLFKGEYIEPKDWDEFITQQDVIVIDTRNDYEVEVGTFKSAINPNTKTFKQFPAWVQQNQELLKGKKIAMVCTGGIRCEKSTSLLKSIGYDEVYHLKGGILQYLEDTQNKNNLWQGECFVFDDRRAVTDDLSPVERHWLQR.

Residues 124 to 218 (TQQDVIVIDT…YLEDTQNKNN (95 aa)) enclose the Rhodanese domain. The Cysteine persulfide intermediate role is filled by cysteine 178.

It belongs to the TrhO family.

It catalyses the reaction uridine(34) in tRNA + AH2 + O2 = 5-hydroxyuridine(34) in tRNA + A + H2O. In terms of biological role, catalyzes oxygen-dependent 5-hydroxyuridine (ho5U) modification at position 34 in tRNAs. This is tRNA uridine(34) hydroxylase from Rickettsia conorii (strain ATCC VR-613 / Malish 7).